The sequence spans 98 residues: NADH-ubiquinone oxidoreductase chain 4L (98 aa).

Transmembrane regions (helical) follow at residues 1–21 (MSLV…GLLM), 29–49 (ALLC…LTIL), and 61–81 (IILL…LVTI).

This sequence belongs to the complex I subunit 4L family. As to quaternary structure, core subunit of respiratory chain NADH dehydrogenase (Complex I) which is composed of 45 different subunits.

It localises to the mitochondrion inner membrane. It catalyses the reaction a ubiquinone + NADH + 5 H(+)(in) = a ubiquinol + NAD(+) + 4 H(+)(out). In terms of biological role, core subunit of the mitochondrial membrane respiratory chain NADH dehydrogenase (Complex I) which catalyzes electron transfer from NADH through the respiratory chain, using ubiquinone as an electron acceptor. Part of the enzyme membrane arm which is embedded in the lipid bilayer and involved in proton translocation. The chain is NADH-ubiquinone oxidoreductase chain 4L (MT-ND4L) from Ziphius cavirostris (Cuvier's beaked whale).